The following is a 41-amino-acid chain: Tachystatin-C (41 aa).

Cystine bridges form between Cys-12/Cys-28, Cys-19/Cys-33, and Cys-27/Cys-38.

As to expression, granular hemocytes, small secretory granules.

The protein resides in the secreted. Functionally, binds to chitin. Shows strong activity against E.coli (IC(50) is 1.2 ug/ml). Is also very active against S.aureus (IC(50) is 0.8 ug/ml), C.albicans (IC(50) is 0.9 ug/ml) and P.pastoris (IC(50) is 0.3 ug/ml). Binds to chitin (5.2 uM are required to obtain 50% of binding). Causes hemolysis on sheep erythrocytes, probably by forming ion-permeable pores. In Tachypleus tridentatus (Japanese horseshoe crab), this protein is Tachystatin-C.